Consider the following 353-residue polypeptide: MRVADFSFALPDNLIARYPQAQRSACRLLSLDGQTGALAHQVFTDLLEELAPGDLLVFNNTRVIPARLFGRKVSGGKIEVLVERVLDDKRVLAHVRASKAPKPGSALLLGDDDSIAATMVARHDALFELRFDDARDVLTLLNDAGHMPLPPYIDRPDDVADRELYQTVYGERPGSVAAPTAGLHFDEPLLAALRAKGVEMAFVTLHVGAGTFQPVRVDQIEHHQMHSEYAEVPQEVVDAVLACKARGNRVVAVGTTAVRSLESAAAAGEQALTPFFGDTSIFIYTGYQFRVVDVLITNFHLPESTLIMLVSAFAGYRHTLAAYREAVAQAYRFFSYGDAMFITRNPAAAAERG.

It belongs to the QueA family. As to quaternary structure, monomer.

The protein resides in the cytoplasm. The catalysed reaction is 7-aminomethyl-7-carbaguanosine(34) in tRNA + S-adenosyl-L-methionine = epoxyqueuosine(34) in tRNA + adenine + L-methionine + 2 H(+). It participates in tRNA modification; tRNA-queuosine biosynthesis. Transfers and isomerizes the ribose moiety from AdoMet to the 7-aminomethyl group of 7-deazaguanine (preQ1-tRNA) to give epoxyqueuosine (oQ-tRNA). In Sodalis glossinidius (strain morsitans), this protein is S-adenosylmethionine:tRNA ribosyltransferase-isomerase.